A 443-amino-acid chain; its full sequence is Amino-acid acetyltransferase (443 aa).

One can recognise an N-acetyltransferase domain in the interval 296–443 (EQIRRATIND…KSKVLMADLG (148 aa)).

It belongs to the acetyltransferase family. ArgA subfamily. As to quaternary structure, homohexamer.

It localises to the cytoplasm. The catalysed reaction is L-glutamate + acetyl-CoA = N-acetyl-L-glutamate + CoA + H(+). Its pathway is amino-acid biosynthesis; L-arginine biosynthesis; N(2)-acetyl-L-ornithine from L-glutamate: step 1/4. Feedback inhibition by L-arginine. The polypeptide is Amino-acid acetyltransferase (argA) (Shigella flexneri).